The sequence spans 343 residues: Anthranilate phosphoribosyltransferase (343 aa).

Residues G78, 81–82 (GD), T86, 88–91 (NIST), 106–114 (KHGNRSVSS), and S118 contribute to the 5-phospho-alpha-D-ribose 1-diphosphate site. G78 lines the anthranilate pocket. S90 is a Mg(2+) binding site. An anthranilate-binding site is contributed by N109. Residue R164 participates in anthranilate binding. Mg(2+)-binding residues include D223 and E224.

The protein belongs to the anthranilate phosphoribosyltransferase family. Homodimer. The cofactor is Mg(2+).

The catalysed reaction is N-(5-phospho-beta-D-ribosyl)anthranilate + diphosphate = 5-phospho-alpha-D-ribose 1-diphosphate + anthranilate. Its pathway is amino-acid biosynthesis; L-tryptophan biosynthesis; L-tryptophan from chorismate: step 2/5. Its function is as follows. Catalyzes the transfer of the phosphoribosyl group of 5-phosphorylribose-1-pyrophosphate (PRPP) to anthranilate to yield N-(5'-phosphoribosyl)-anthranilate (PRA). The polypeptide is Anthranilate phosphoribosyltransferase (Chlamydia caviae (strain ATCC VR-813 / DSM 19441 / 03DC25 / GPIC) (Chlamydophila caviae)).